Reading from the N-terminus, the 582-residue chain is DNA mismatch repair protein MutL (582 aa).

It belongs to the DNA mismatch repair MutL/HexB family.

In terms of biological role, this protein is involved in the repair of mismatches in DNA. It is required for dam-dependent methyl-directed DNA mismatch repair. May act as a 'molecular matchmaker', a protein that promotes the formation of a stable complex between two or more DNA-binding proteins in an ATP-dependent manner without itself being part of a final effector complex. This is DNA mismatch repair protein MutL from Buchnera aphidicola subsp. Schizaphis graminum (strain Sg).